The sequence spans 1481 residues: Cystic fibrosis transmembrane conductance regulator (1481 aa).

Residues Met-1–Phe-77 lie on the Cytoplasmic side of the membrane. Residues Phe-78–Gln-98 form a helical membrane-spanning segment. The 285-residue stretch at Phe-81 to Leu-365 folds into the ABC transmembrane type-1 1 domain. Topologically, residues Pro-99–Tyr-122 are extracellular. The helical transmembrane segment at Leu-123–His-146 threads the bilayer. At His-147–Leu-195 the chain is on the cytoplasmic side. Residues Ala-196–Trp-216 traverse the membrane as a helical segment. Over Glu-217–Ser-222 the chain is Extracellular. The chain crosses the membrane as a helical span at residues Ala-223–Met-243. Topologically, residues Met-244–Lys-298 are cytoplasmic. The helical transmembrane segment at Ala-299–Phe-319 threads the bilayer. The Extracellular segment spans residues Leu-320 to Thr-339. A helical membrane pass occupies residues Ile-340 to Val-358. At Gln-359–Ser-858 the chain is on the cytoplasmic side. Residues Trp-401, Ser-434, Gly-458–Thr-465, and Gln-493 contribute to the ATP site. The ABC transporter 1 domain maps to Asn-423–Gly-646. Residue Cys-524 is the site of S-palmitoyl cysteine attachment. Phosphoserine is present on residues Ser-549 and Ser-660. The interval Ser-654–Glu-831 is disordered R region. Position 670 is a phosphoserine; by PKA (Ser-670). The residue at position 686 (Ser-686) is a Phosphoserine. Lys-688 participates in a covalent cross-link: Glycyl lysine isopeptide (Lys-Gly) (interchain with G-Cter in ubiquitin). Phosphoserine is present on residues Ser-700 and Ser-712. At Thr-717 the chain carries Phosphothreonine. A phosphoserine mark is found at Ser-737, Ser-753, Ser-768, Ser-790, Ser-795, and Ser-813. A helical membrane pass occupies residues Leu-859–Val-879. Residues Leu-859–Ser-1155 form the ABC transmembrane type-1 2 domain. At Val-880 to Ile-918 the chain is on the extracellular side. Residues Asn-894 and Asn-900 are each glycosylated (N-linked (GlcNAc...) asparagine). The discontinuously helical transmembrane segment at Tyr-919 to His-939 threads the bilayer. Over Thr-940–Thr-990 the chain is Cytoplasmic. A helical membrane pass occupies residues Ile-991–Leu-1011. Residues Gln-1012–Pro-1013 lie on the Extracellular side of the membrane. A helical membrane pass occupies residues Tyr-1014 to Leu-1034. At Gln-1035–Thr-1095 the chain is on the cytoplasmic side. The chain crosses the membrane as a helical span at residues Leu-1096 to Phe-1116. The Extracellular portion of the chain corresponds to Ile-1117–Gly-1130. The helical transmembrane segment at Ile-1131–Ile-1151 threads the bilayer. Residues Asp-1152–Leu-1481 lie on the Cytoplasmic side of the membrane. The region spanning Met-1211–Pro-1444 is the ABC transporter 2 domain. Residues Tyr-1220 and Gly-1245–Ser-1252 each bind ATP. The segment at Arg-1387–Leu-1481 is interaction with GORASP2. Cys-1396 is lipidated: S-palmitoyl cysteine. A phosphoserine mark is found at Ser-1445 and Ser-1457. A PDZ-binding motif is present at residues Thr-1479–Leu-1481.

The protein belongs to the ABC transporter superfamily. ABCC family. CFTR transporter (TC 3.A.1.202) subfamily. As to quaternary structure, monomer; does not require oligomerization for channel activity. May form oligomers in the membrane. Interacts with SLC26A3, SLC26A6 and NHERF1. Interacts with SHANK2. Interacts with MYO6. Interacts (via C-terminus) with GOPC (via PDZ domain); this promotes CFTR internalization and thereby decreases channel activity. Interacts with SLC4A7 through NHERF1. Found in a complex with MYO5B and RAB11A. Interacts with ANO1. Interacts with SLC26A8. Interacts with AHCYL1; the interaction increases CFTR activity. Interacts with CSE1L. The core-glycosylated form interacts with GORASP2 (via PDZ GRASP-type 1 domain) in respone to ER stress. Interacts with MARCHF2; the interaction leads to CFTR ubiqtuitination and degradation. Interacts with ADGRG2. Post-translationally, N-glycosylated. In terms of processing, phosphorylated; cAMP treatment promotes phosphorylation and activates the channel. Dephosphorylation decreases the ATPase activity (in vitro). Phosphorylation at PKA sites activates the channel. Phosphorylation at PKC sites enhances the response to phosphorylation by PKA. Phosphorylated by AMPK; this inhibits channel activity. Ubiquitinated, leading to its degradation in the lysosome. Deubiquitination by USP10 in early endosomes enhances its endocytic recycling to the cell membrane. Ubiquitinated by RNF185 during ER stress. Ubiquitinated by MARCHF2.

It is found in the apical cell membrane. The protein resides in the early endosome membrane. It localises to the cell membrane. The protein localises to the recycling endosome membrane. Its subcellular location is the endoplasmic reticulum membrane. It is found in the nucleus. It catalyses the reaction ATP + H2O + closed Cl(-) channel = ADP + phosphate + open Cl(-) channel.. The enzyme catalyses chloride(in) = chloride(out). It carries out the reaction hydrogencarbonate(in) = hydrogencarbonate(out). The catalysed reaction is ATP + H2O = ADP + phosphate + H(+). Epithelial ion channel that plays an important role in the regulation of epithelial ion and water transport and fluid homeostasis. Mediates the transport of chloride ions across the cell membrane. Possesses an intrinsic ATPase activity and utilizes ATP to gate its channel; the passive flow of anions through the channel is gated by cycles of ATP binding and hydrolysis by the ATP-binding domains. The ion channel is also permeable to HCO(3)(-); selectivity depends on the extracellular chloride concentration. Exerts its function also by modulating the activity of other ion channels and transporters. Contributes to the regulation of the pH and the ion content of the epithelial fluid layer. Modulates the activity of the epithelial sodium channel (ENaC) complex, in part by regulating the cell surface expression of the ENaC complex. May regulate bicarbonate secretion and salvage in epithelial cells by regulating the transporter SLC4A7. Can inhibit the chloride channel activity of ANO1. Plays a role in the chloride and bicarbonate homeostasis during sperm epididymal maturation and capacitation. This chain is Cystic fibrosis transmembrane conductance regulator, found in Macaca nemestrina (Pig-tailed macaque).